A 380-amino-acid polypeptide reads, in one-letter code: Chaperone protein DnaJ (380 aa).

The J domain occupies 5–70 (DYYEVLGVER…SKRAAYDQYG (66 aa)). A CR-type zinc finger spans residues 139-217 (GTTVNIRVPT…CHGEGRVEES (79 aa)). The Zn(2+) site is built by C152, C155, C169, C172, C191, C194, C205, and C208. 4 CXXCXGXG motif repeats span residues 152-159 (CKPCDGSG), 169-176 (CPTCGGIG), 191-198 (CPRCHGHG), and 205-212 (CDSCHGEG).

Belongs to the DnaJ family. In terms of assembly, homodimer. It depends on Zn(2+) as a cofactor.

The protein localises to the cytoplasm. Its function is as follows. Participates actively in the response to hyperosmotic and heat shock by preventing the aggregation of stress-denatured proteins and by disaggregating proteins, also in an autonomous, DnaK-independent fashion. Unfolded proteins bind initially to DnaJ; upon interaction with the DnaJ-bound protein, DnaK hydrolyzes its bound ATP, resulting in the formation of a stable complex. GrpE releases ADP from DnaK; ATP binding to DnaK triggers the release of the substrate protein, thus completing the reaction cycle. Several rounds of ATP-dependent interactions between DnaJ, DnaK and GrpE are required for fully efficient folding. Also involved, together with DnaK and GrpE, in the DNA replication of plasmids through activation of initiation proteins. The protein is Chaperone protein DnaJ of Pseudomonas syringae pv. tomato (strain ATCC BAA-871 / DC3000).